Here is a 492-residue protein sequence, read N- to C-terminus: Probable cytosol aminopeptidase (492 aa).

Lys259 and Asp264 together coordinate Mn(2+). Lys271 is a catalytic residue. Positions 283, 342, and 344 each coordinate Mn(2+). Residue Arg346 is part of the active site.

It belongs to the peptidase M17 family. The cofactor is Mn(2+).

It is found in the cytoplasm. The enzyme catalyses Release of an N-terminal amino acid, Xaa-|-Yaa-, in which Xaa is preferably Leu, but may be other amino acids including Pro although not Arg or Lys, and Yaa may be Pro. Amino acid amides and methyl esters are also readily hydrolyzed, but rates on arylamides are exceedingly low.. It carries out the reaction Release of an N-terminal amino acid, preferentially leucine, but not glutamic or aspartic acids.. Functionally, presumably involved in the processing and regular turnover of intracellular proteins. Catalyzes the removal of unsubstituted N-terminal amino acids from various peptides. This is Probable cytosol aminopeptidase (pepA) from Synechocystis sp. (strain ATCC 27184 / PCC 6803 / Kazusa).